The chain runs to 372 residues: N-methyl-L-tryptophan oxidase (372 aa).

4–34 (DLIIIGSGSVGAAAGYYATRAGLNVLMTDAH) provides a ligand contact to FAD. Position 308 is an S-8alpha-FAD cysteine (cysteine 308).

Belongs to the MSOX/MTOX family. MTOX subfamily. Monomer. FAD serves as cofactor.

The enzyme catalyses N(alpha)-methyl-L-tryptophan + O2 + H2O = L-tryptophan + formaldehyde + H2O2. In terms of biological role, catalyzes the oxidative demethylation of N-methyl-L-tryptophan. The protein is N-methyl-L-tryptophan oxidase of Shigella flexneri serotype 5b (strain 8401).